The chain runs to 132 residues: MDLPYYHGRLTKQDCETLLLKEGVDGNFLLRDSESIPGVLCLCVSFKNIVYTYRIFREKHGYYRIQTAEGSPKQVFPSLKELISKFEKPNQGMVVHLLKPIKRTSPSLRWRGLKLELETFVNSNSDYVDVLP.

Residues 5-101 (YYHGRLTKQD…GMVVHLLKPI (97 aa)) enclose the SH2 domain. Tyr-127 carries the post-translational modification Phosphotyrosine.

In terms of assembly, binds to the phosphorylated receptors CD84, SLAMF1, LY9 and CD244. Does not bind to non-phosphorylated SLAMF1. Interacts with SLAMF7 (via ITSM phosphorylated on 'Tyr-304'). Interacts with Src kinases HCK, LYN, FYN, FGR and LCK (via kinase domains). Interacts (phosphorylated at Tyr-127) with PLCG1.

Its function is as follows. Cytoplasmic adapter regulating receptors of the signaling lymphocytic activation molecule (SLAM) family such as CD84, SLAMF1, LY9 and CD244. In SLAM signaling seems to cooperate with SH2D1A/SAP. Plays a role in regulation of effector functions of natural killer (NK) cells by controlling signal transduction through CD244/2B4 without effecting its tyrosine phosphorylation; downstream signaling involves PLCG1 and ERK activation. Activation of SLAMF7-mediated NK cell function does not effect receptor tyrosine phosphorylation but distal signaling. In the context of NK cell-mediated cytotoxicity does not enhance conjugate formation with target cells but stimulates polarization of the microtubule-organizing center and cytotoxic granules toward the NK cell synapse. Negatively regulates CD40-induced cytokine production in dendritic cells downstream of SLAM family receptors probably by inducing activation of the PI3K pathway to inhibit p38 MAPK and JNK activation. The chain is SH2 domain-containing protein 1B (SH2D1B) from Homo sapiens (Human).